The chain runs to 92 residues: DNA-directed RNA polymerase subunit omega (92 aa).

Belongs to the RNA polymerase subunit omega family. The RNAP catalytic core consists of 2 alpha, 1 beta, 1 beta' and 1 omega subunit. When a sigma factor is associated with the core the holoenzyme is formed, which can initiate transcription.

It carries out the reaction RNA(n) + a ribonucleoside 5'-triphosphate = RNA(n+1) + diphosphate. Promotes RNA polymerase assembly. Latches the N- and C-terminal regions of the beta' subunit thereby facilitating its interaction with the beta and alpha subunits. In Corynebacterium diphtheriae (strain ATCC 700971 / NCTC 13129 / Biotype gravis), this protein is DNA-directed RNA polymerase subunit omega.